The chain runs to 335 residues: MGHPPLLPLLLLLHTCVPASWGLRCMQCKTNGDCRVEECALGQDLCRTTIVRLWEEGEELELVEKSCTHSEKTNRTLSYRTGLKITSLTEVVCGLDLCNQGNSGRAVTYSRSRYLECISCGSSDMSCERGRHQSLQCRSPEEQCLDVVTHWIQEGEEGRPKDDRHLRGCGYLPGCPGSNGFHNNDTFHFLKCCNTTKCNEGPILELENLPQNGRQCYSCKGNSTHGCSSEETFLIDCRGPMNQCLVATGTHEPKNQSYMVRGCATASMCQHAHLGDAFSMNHIDVSCCTKSGCNHPDLDVQYRSGAAPQPGPAHLSLTITLLMTARLWGGTLLWT.

The signal sequence occupies residues methionine 1–glycine 22. 3 consecutive UPAR/Ly6 domains span residues leucine 23–tyrosine 114, leucine 115–glycine 213, and arginine 214–glycine 305. 3 disulfide bridges follow: cysteine 25-cysteine 46, cysteine 28-cysteine 34, and cysteine 39-cysteine 67. Residue asparagine 74 is glycosylated (N-linked (GlcNAc...) asparagine). Disulfide bonds link cysteine 93–cysteine 98, cysteine 117–cysteine 144, cysteine 120–cysteine 127, cysteine 137–cysteine 169, cysteine 175–cysteine 192, cysteine 193–cysteine 198, cysteine 216–cysteine 244, cysteine 219–cysteine 227, cysteine 237–cysteine 263, cysteine 269–cysteine 287, and cysteine 288–cysteine 293. 4 N-linked (GlcNAc...) asparagine glycosylation sites follow: asparagine 184, asparagine 194, asparagine 222, and asparagine 255. A lipid anchor (GPI-anchor amidated glycine) is attached at glycine 305. Residues alanine 306–threonine 335 constitute a propeptide, removed in mature form.

As to quaternary structure, monomer. Interacts with MRC2. Interacts (via the UPAR/Ly6 domains) with SRPX2. Interacts with FAP (seprase); the interaction occurs at the cell surface of invadopodia membrane. Interacts with SORL1 (via N-terminal ectodomain); this interaction decreases PLAUR internalization. The ternary complex composed of PLAUR-PLAU-SERPINE1 also interacts with SORL1. Interacts with CD82; this interaction prevents PLAUR from binding to its high affinity ligand PLAU. Expressed in neurons of the rolandic area of the brain (at protein level). Expressed in the brain.

The protein localises to the cell membrane. It is found in the cell projection. The protein resides in the invadopodium membrane. Its subcellular location is the secreted. Functionally, acts as a receptor for urokinase plasminogen activator. Plays a role in localizing and promoting plasmin formation. Mediates the proteolysis-independent signal transduction activation effects of U-PA. It is subject to negative-feedback regulation by U-PA which cleaves it into an inactive form. This chain is Urokinase plasminogen activator surface receptor (PLAUR), found in Homo sapiens (Human).